Reading from the N-terminus, the 215-residue chain is Protein-L-isoaspartate O-methyltransferase (215 aa).

Ser-62 is a catalytic residue.

This sequence belongs to the methyltransferase superfamily. L-isoaspartyl/D-aspartyl protein methyltransferase family.

The protein resides in the cytoplasm. The enzyme catalyses [protein]-L-isoaspartate + S-adenosyl-L-methionine = [protein]-L-isoaspartate alpha-methyl ester + S-adenosyl-L-homocysteine. Its function is as follows. Catalyzes the methyl esterification of L-isoaspartyl residues in peptides and proteins that result from spontaneous decomposition of normal L-aspartyl and L-asparaginyl residues. It plays a role in the repair and/or degradation of damaged proteins. The sequence is that of Protein-L-isoaspartate O-methyltransferase from Rhodopseudomonas palustris (strain BisA53).